The primary structure comprises 604 residues: MPDSSFDGKAFVLTLPSQPGVYRMLNAAGDVIYVGKAIDLRKRVSSYFQKSNLSPRIQLMVSQITGIETTVTRSEAEALLLENNLIKSLAPRYNILFRDDKSYPYLLLTNHAFPRLAFYRGALDNRHQYFGPFPNAGVVKSSIQLLQKVFRLRTCENSVFNNRTRPCLLHQIKRCSAPCVNLITPEAYREDVNSAALFLQGKQDEVLKTIEQKMFEASDRQAYEQAVLFRDQMQALRMIQEKQFVDSSRALDADVIACTTGTDKHTVAVNLVMIRSGRHLGDKTFFPQNTHEDSISTVLEAFVSQHYLNRSVPPLIILGKKIRVTLLQKLLSEQAGHKVTLTINPIGERRKWLDMATENAQLALRQKQIQQASQEDRLQALQEVLNLPGLARIECFDISHTMGEATMASCVVYDHYAMRNGEYRRYNITGITPGDDYAAMRDVLQRRYAKIAMEEGKLPDLILIDGGKGQIGVASEVMIELGLNDIPLVGVAKGEARKPGLEQLILPWQEETLHLPNDHPALHLIQQIRDEAHRFAIQGHRAKRAKTRKTSSLEQIAGIGSKRRQNLLTRFGGLKGVKNASIEELQQTEGVSRALAEKIYRELR.

Positions 17–95 (SQPGVYRMLN…IKSLAPRYNI (79 aa)) constitute a GIY-YIG domain. Residues 204–239 (DEVLKTIEQKMFEASDRQAYEQAVLFRDQMQALRMI) form the UVR domain.

This sequence belongs to the UvrC family. As to quaternary structure, interacts with UvrB in an incision complex.

The protein resides in the cytoplasm. Its function is as follows. The UvrABC repair system catalyzes the recognition and processing of DNA lesions. UvrC both incises the 5' and 3' sides of the lesion. The N-terminal half is responsible for the 3' incision and the C-terminal half is responsible for the 5' incision. The protein is UvrABC system protein C of Nitrosomonas eutropha (strain DSM 101675 / C91 / Nm57).